Consider the following 122-residue polypeptide: Large ribosomal subunit protein uL14c (122 aa).

It belongs to the universal ribosomal protein uL14 family. As to quaternary structure, part of the 50S ribosomal subunit.

It localises to the plastid. The protein localises to the chloroplast. Its function is as follows. Binds to 23S rRNA. The polypeptide is Large ribosomal subunit protein uL14c (Nandina domestica (Heavenly bamboo)).